Consider the following 165-residue polypeptide: Endoribonuclease YbeY (165 aa).

His-119, His-123, and His-129 together coordinate Zn(2+).

This sequence belongs to the endoribonuclease YbeY family. Requires Zn(2+) as cofactor.

The protein resides in the cytoplasm. In terms of biological role, single strand-specific metallo-endoribonuclease involved in late-stage 70S ribosome quality control and in maturation of the 3' terminus of the 16S rRNA. The chain is Endoribonuclease YbeY from Streptomyces coelicolor (strain ATCC BAA-471 / A3(2) / M145).